We begin with the raw amino-acid sequence, 173 residues long: MTLDDIKEMIREIPDFPKKGIRFKDITPVLKDAKAFNYSIEMLAKALEGRKFDLIAAPEARGFLFGAPLAFRLGVGFVPVRKPGKLPAETLSYEYELEYGLDSLEIHKDAVVKGQRVVIVDDLLATGGTVYASAKLVESLGGVVDSILFLTELTFLDGRKKLDGYDIISLIKF.

Belongs to the purine/pyrimidine phosphoribosyltransferase family. As to quaternary structure, homodimer.

The protein localises to the cytoplasm. The catalysed reaction is AMP + diphosphate = 5-phospho-alpha-D-ribose 1-diphosphate + adenine. The protein operates within purine metabolism; AMP biosynthesis via salvage pathway; AMP from adenine: step 1/1. Catalyzes a salvage reaction resulting in the formation of AMP, that is energically less costly than de novo synthesis. The protein is Adenine phosphoribosyltransferase of Caldanaerobacter subterraneus subsp. tengcongensis (strain DSM 15242 / JCM 11007 / NBRC 100824 / MB4) (Thermoanaerobacter tengcongensis).